Here is a 715-residue protein sequence, read N- to C-terminus: Protein naked cuticle homolog (715 aa).

One can recognise an EF-hand domain in the interval 18–53 (KKPQPLQFSFTLYDLDGHGKITKDDIAGIVSTIYES). The interval 256–282 (SRAKRKVVRKSRSSRKASKLTDDFSRP) is disordered. A compositionally biased stretch (basic residues) spans 257–273 (RAKRKVVRKSRSSRKAS). The tract at residues 305 to 334 (ECWKSSLCRRELIEIIRDSMVKNSLCFQPN) is required for nuclear localization and inhibition of Wnt signaling. A disordered region spans residues 639–690 (ELHQSVQQQQGTHQQQQQPQSSVSSPTHHHHHHAGASLLGENSGSSASAAST). 2 stretches are compositionally biased toward low complexity: residues 642–664 (QSVQQQQGTHQQQQQPQSSVSSP) and 673–690 (GASLLGENSGSSASAAST).

Belongs to the NKD family.

The protein localises to the cell membrane. The protein resides in the cytoplasm. It localises to the nucleus. Functionally, cell autonomous antagonist of the canonical Wnt signaling pathway. May activate a second Wnt signaling pathway that controls planar cell polarity. Required for neuroblast specification. In Aedes aegypti (Yellowfever mosquito), this protein is Protein naked cuticle homolog.